The primary structure comprises 322 residues: GTP 3',8-cyclase (322 aa).

Residues 5–217 (SYGRVIDYLR…NIIAQKYSFK (213 aa)) enclose the Radical SAM core domain. R14 provides a ligand contact to GTP. Residues C21 and C25 each contribute to the [4Fe-4S] cluster site. Position 27 (Y27) interacts with S-adenosyl-L-methionine. Residue C28 participates in [4Fe-4S] cluster binding. Residue R64 participates in GTP binding. Position 68 (G68) interacts with S-adenosyl-L-methionine. T95 lines the GTP pocket. S119 is a binding site for S-adenosyl-L-methionine. K155 provides a ligand contact to GTP. M189 contacts S-adenosyl-L-methionine. The [4Fe-4S] cluster site is built by C249 and C252. 254 to 256 (RIR) is a GTP binding site. C266 contacts [4Fe-4S] cluster.

Belongs to the radical SAM superfamily. MoaA family. As to quaternary structure, monomer and homodimer. Requires [4Fe-4S] cluster as cofactor.

It carries out the reaction GTP + AH2 + S-adenosyl-L-methionine = (8S)-3',8-cyclo-7,8-dihydroguanosine 5'-triphosphate + 5'-deoxyadenosine + L-methionine + A + H(+). It participates in cofactor biosynthesis; molybdopterin biosynthesis. Catalyzes the cyclization of GTP to (8S)-3',8-cyclo-7,8-dihydroguanosine 5'-triphosphate. This chain is GTP 3',8-cyclase, found in Campylobacter lari (strain RM2100 / D67 / ATCC BAA-1060).